The following is a 294-amino-acid chain: Transcription repressor OFP14 (294 aa).

The segment covering 49–60 (SFKHRRRSSKTR) has biased composition (basic residues). Disordered stretches follow at residues 49–72 (SFKH…HQDS), 96–129 (DDQE…DDDD), and 141–185 (AVYD…SRST). Composition is skewed to basic and acidic residues over residues 61–72 (FSKEEPVYHQDS) and 96–117 (DDQE…RESS). Residues 118-128 (SDDSDDDDDDD) show a composition bias toward acidic residues. The segment covering 164 to 185 (SSEGRPSMETTSTSSERQSRST) has biased composition (low complexity). The region spanning 195 to 259 (VLRYTDEPQE…LSAFVDLIIA (65 aa)) is the OVATE domain.

Interacts with KNAT2 and KNAT3. As to expression, expressed in roots, rosette and cauline leaves, shoots, stems, flower buds and siliques.

Its subcellular location is the nucleus. Functionally, transcriptional repressor that may regulate multiple aspects of plant growth and development through the regulation of BEL1-LIKE (BLH) and KNOX TALE (KNAT) homeodomain transcription factors. The sequence is that of Transcription repressor OFP14 (OFP14) from Arabidopsis thaliana (Mouse-ear cress).